The following is a 1159-amino-acid chain: RAD51-associated protein 2 (1159 aa).

The disordered stretch occupies residues 1–35; the sequence is MSLPQPTPRMAELRKPTSSLTPPEDPDSQPPSSKR. The interval 1111–1159 is interaction with RAD51; sequence SHFPHGISRVRPLKTCSRPIRIGLSRKARIKQLHPYLKQMCYGNLKENF.

Interacts with RAD51. As to expression, specifically expressed in meiotic tissues. Highly expressed in testis.

This Homo sapiens (Human) protein is RAD51-associated protein 2 (RAD51AP2).